The chain runs to 364 residues: UDP-N-acetylglucosamine--N-acetylmuramyl-(pentapeptide) pyrophosphoryl-undecaprenol N-acetylglucosamine transferase (364 aa).

UDP-N-acetyl-alpha-D-glucosamine contacts are provided by residues 14–16, N126, R163, S190, I246, 265–270, and Q291; these read TGG and ALTVSE.

This sequence belongs to the glycosyltransferase 28 family. MurG subfamily.

It localises to the cell inner membrane. The enzyme catalyses di-trans,octa-cis-undecaprenyl diphospho-N-acetyl-alpha-D-muramoyl-L-alanyl-D-glutamyl-meso-2,6-diaminopimeloyl-D-alanyl-D-alanine + UDP-N-acetyl-alpha-D-glucosamine = di-trans,octa-cis-undecaprenyl diphospho-[N-acetyl-alpha-D-glucosaminyl-(1-&gt;4)]-N-acetyl-alpha-D-muramoyl-L-alanyl-D-glutamyl-meso-2,6-diaminopimeloyl-D-alanyl-D-alanine + UDP + H(+). It participates in cell wall biogenesis; peptidoglycan biosynthesis. Cell wall formation. Catalyzes the transfer of a GlcNAc subunit on undecaprenyl-pyrophosphoryl-MurNAc-pentapeptide (lipid intermediate I) to form undecaprenyl-pyrophosphoryl-MurNAc-(pentapeptide)GlcNAc (lipid intermediate II). In Shewanella loihica (strain ATCC BAA-1088 / PV-4), this protein is UDP-N-acetylglucosamine--N-acetylmuramyl-(pentapeptide) pyrophosphoryl-undecaprenol N-acetylglucosamine transferase.